A 222-amino-acid chain; its full sequence is Physcion biosynthesis cluster O-methyltransferase (222 aa).

It belongs to the methyltransferase superfamily.

The catalysed reaction is emodin + S-adenosyl-L-methionine = physcion + S-adenosyl-L-homocysteine. It participates in secondary metabolite biosynthesis. In terms of biological role, O-methyltransferase; part of the gene cluster that mediates the biosynthesis of physcion, a natural anthraquinone fungicide that can prevent plant fungal infections. Within the pathway, the O-methyltransferase AcOMT catalyzes the last step by transferring a methyl group to C-6 hydroxyl of emodin to form physcion. AcOMT may also methylate the C-6 hydroxyl group of emodin anthrone to produce physcion-anthrone B. The pathway begins with the polyketide synthase AcPKS that condenses 8 malonyl-CoA units to synthesize atrochrysone thioester which is released from the synthase by the atrochrysone carboxyl ACP thioesterase AcTE that breaks the thioester bond and leads to free atrochrysone carboxylic acid. Spontaneous decarboxylation of atrochrysone carboxylic acid leads to the formation of atrochrysone. Then, atrochrysone undergoes spontaneous dehydration and oxidation, giving the products emodin anthrone and emodin. The O-methyltransferase AcOMT then methylates the C-6 hydroxyl of emodin to form physcion. The chain is Physcion biosynthesis cluster O-methyltransferase from Aspergillus chevalieri (Eurotium chevalieri).